We begin with the raw amino-acid sequence, 299 residues long: Tyrosine recombinase XerC (299 aa).

In terms of domain architecture, Core-binding (CB) spans 3–87 (PQCQSYLQQF…AIKQWGEFLL (85 aa)). One can recognise a Tyr recombinase domain in the interval 108–287 (PLPKNIDVDS…DFQHLAKVYD (180 aa)). Catalysis depends on residues Arg147, Lys171, His239, Arg242, and His265. Tyr274 functions as the O-(3'-phospho-DNA)-tyrosine intermediate in the catalytic mechanism.

This sequence belongs to the 'phage' integrase family. XerC subfamily. As to quaternary structure, forms a cyclic heterotetrameric complex composed of two molecules of XerC and two molecules of XerD.

The protein resides in the cytoplasm. Site-specific tyrosine recombinase, which acts by catalyzing the cutting and rejoining of the recombining DNA molecules. The XerC-XerD complex is essential to convert dimers of the bacterial chromosome into monomers to permit their segregation at cell division. It also contributes to the segregational stability of plasmids. This is Tyrosine recombinase XerC from Shewanella sp. (strain ANA-3).